Reading from the N-terminus, the 75-residue chain is Sec-independent protein translocase protein TatA (75 aa).

Residues 1-21 traverse the membrane as a helical segment; that stretch reads MGMPSMPELLIVLAIVVLLFG. The tract at residues 47–75 is disordered; the sequence is DEEEEVKEITKKEEPKVEAAAEEKKSENA. Over residues 53–75 the composition is skewed to basic and acidic residues; that stretch reads KEITKKEEPKVEAAAEEKKSENA.

This sequence belongs to the TatA/E family. As to quaternary structure, the Tat system comprises two distinct complexes: a TatABC complex, containing multiple copies of TatA, TatB and TatC subunits, and a separate TatA complex, containing only TatA subunits. Substrates initially bind to the TatABC complex, which probably triggers association of the separate TatA complex to form the active translocon.

The protein resides in the cell inner membrane. In terms of biological role, part of the twin-arginine translocation (Tat) system that transports large folded proteins containing a characteristic twin-arginine motif in their signal peptide across membranes. TatA could form the protein-conducting channel of the Tat system. The protein is Sec-independent protein translocase protein TatA of Sulfurovum sp. (strain NBC37-1).